A 582-amino-acid chain; its full sequence is External alternative NAD(P)H-ubiquinone oxidoreductase B4, mitochondrial (582 aa).

A mitochondrion-targeting transit peptide spans 1-39 (MSFHSFYQRASSLFKAYPSTSKILLLSTFSGGGGVLVYS). Residue 65–95 (KVVVLGSGWSGYSFLSYLNNPNYDVQVVSPR) coordinates FAD. 227 to 263 (LHFVVVGGGPTGVEFSAELHDFLVQDVAKIYPKVQEF) contributes to the NAD(+) binding site. The 36-residue stretch at 384–419 (RVMEDIAAIFNKADKGNTGTLKKKDFNSVVKDICQR) folds into the EF-hand domain. Ca(2+)-binding residues include D397, T401, T403, and D408. The Microbody targeting signal motif lies at 573–582 (FVFGRDSSSI).

Belongs to the NADH dehydrogenase family. FAD serves as cofactor. As to expression, expressed in seedlings, roots, cotyledons, stems, buds and flowers and, to a lower extent, in stems and leaves.

The protein localises to the mitochondrion inner membrane. The protein resides in the peroxisome. It catalyses the reaction a quinone + NADH + H(+) = a quinol + NAD(+). The enzyme catalyses a ubiquinone + NADH + H(+) = a ubiquinol + NAD(+). No effect of calcium ions on activity. Functionally, alternative NADH-ubiquinone oxidoreductase which catalyzes the oxidation of mitochondrial NADH does not translocate protons across the inner mitochondrial membrane. NAD(P)H dehydrogenase; more efficient on NADH. This chain is External alternative NAD(P)H-ubiquinone oxidoreductase B4, mitochondrial (NDB4), found in Arabidopsis thaliana (Mouse-ear cress).